Reading from the N-terminus, the 364-residue chain is Dihydroorotate dehydrogenase (quinone) (364 aa).

Residues 62-66 and Thr86 each bind FMN; that span reads AGFDK. Lys66 is a binding site for substrate. 111–115 contributes to the substrate binding site; sequence NRMGF. The FMN site is built by Asn142 and Asn175. Residue Asn175 coordinates substrate. Catalysis depends on Ser178, which acts as the Nucleophile. Asn180 contacts substrate. Residues Lys216 and Thr244 each contribute to the FMN site. 245-246 is a binding site for substrate; it reads NT. FMN-binding positions include Gly267, Gly296, and 317-318; that span reads YT.

Belongs to the dihydroorotate dehydrogenase family. Type 2 subfamily. As to quaternary structure, monomer. It depends on FMN as a cofactor.

Its subcellular location is the cell membrane. It catalyses the reaction (S)-dihydroorotate + a quinone = orotate + a quinol. It participates in pyrimidine metabolism; UMP biosynthesis via de novo pathway; orotate from (S)-dihydroorotate (quinone route): step 1/1. In terms of biological role, catalyzes the conversion of dihydroorotate to orotate with quinone as electron acceptor. The polypeptide is Dihydroorotate dehydrogenase (quinone) (Anaeromyxobacter sp. (strain K)).